The chain runs to 283 residues: Tyrosine recombinase THA_404 (283 aa).

A Core-binding (CB) domain is found at 1-86 (MDKVIEMFSD…SLNSFFNYLE (86 aa)). Residues 107 to 281 (KIPDFLTEDE…ADQEKFDAVK (175 aa)) form the Tyr recombinase domain. Active-site residues include arginine 145, lysine 170, histidine 233, arginine 236, and histidine 259. The active-site O-(3'-phospho-DNA)-tyrosine intermediate is the tyrosine 268.

It belongs to the 'phage' integrase family.

It is found in the cytoplasm. Its function is as follows. Site-specific tyrosine recombinase, which acts by catalyzing the cutting and rejoining of the recombining DNA molecules. The protein is Tyrosine recombinase THA_404 of Thermosipho africanus (strain TCF52B).